The chain runs to 139 residues: ATP synthase epsilon chain (139 aa).

The protein belongs to the ATPase epsilon chain family. As to quaternary structure, F-type ATPases have 2 components, CF(1) - the catalytic core - and CF(0) - the membrane proton channel. CF(1) has five subunits: alpha(3), beta(3), gamma(1), delta(1), epsilon(1). CF(0) has three main subunits: a, b and c.

The protein localises to the cell inner membrane. Produces ATP from ADP in the presence of a proton gradient across the membrane. This is ATP synthase epsilon chain from Salmonella typhimurium (strain LT2 / SGSC1412 / ATCC 700720).